Consider the following 1792-residue polypeptide: Brefeldin A-inhibited guanine nucleotide-exchange protein 2 (1792 aa).

M1 is subject to N-acetylmethionine. The segment at 2-224 (QESQTKSMFV…KPQSPVIQAT (223 aa)) is DCB; DCB:DCB domain and DCB:HUS domain interaction. The segment at 207 to 294 (ELEKPMQSKP…SRGTDSGAQE (88 aa)) is disordered. Residues S214, S218, and S227 each carry the phosphoserine modification. Positions 214-225 (SKPQSPVIQATA) are enriched in polar residues. Over residues 233 to 243 (LKQSQAQSKPT) the composition is skewed to polar residues. T244 is modified (phosphothreonine). Phosphoserine is present on residues S355 and S356. Residues 515-535 (ADAQCVVDIYVNYDCDLNAAN) are HUS; DCB:HUS domain interaction. The residue at position 621 (S621) is a Phosphoserine. T623 carries the post-translational modification Phosphothreonine. Residue S624 is modified to Phosphoserine. Phosphothreonine is present on T633. Positions 661–792 (FNKKPKRGIQ…IIMLTTDLHS (132 aa)) constitute an SEC7 domain. Residues S707, S1518, S1520, S1521, S1532, S1535, S1541, and S1789 each carry the phosphoserine modification.

As to quaternary structure, homodimer. Interacts with ARFGEF1/BIG1; both proteins are probably part of the same or very similar macromolecular complexes. Interacts with PRKAR1A, PRKAR2A, PRKAR1B, PRKAR2B, PPP1CC, PDE3A, TNFRSF1A, MYCBP and EXOC7. Interacts with GABRB1, GABRB2 and GABRB3. In vitro phosphorylated by PKA reducing its GEF activity and dephosphorylated by phosphatase PP1.

Its subcellular location is the cytoplasm. It is found in the membrane. It localises to the golgi apparatus. The protein resides in the perinuclear region. The protein localises to the trans-Golgi network. Its subcellular location is the endosome. It is found in the cytoskeleton. It localises to the microtubule organizing center. The protein resides in the centrosome. The protein localises to the cell projection. Its subcellular location is the dendrite. It is found in the cytoplasmic vesicle. It localises to the synapse. With respect to regulation, inhibited by brefeldin A. Its function is as follows. Promotes guanine-nucleotide exchange on ARF1 and ARF3 and to a lower extent on ARF5 and ARF6. Promotes the activation of ARF1/ARF5/ARF6 through replacement of GDP with GTP. Involved in the regulation of Golgi vesicular transport. Required for the integrity of the endosomal compartment. Involved in trafficking from the trans-Golgi network (TGN) to endosomes and is required for membrane association of the AP-1 complex and GGA1. Seems to be involved in recycling of the transferrin receptor from recycling endosomes to the plasma membrane. Probably is involved in the exit of GABA(A) receptors from the endoplasmic reticulum. Involved in constitutive release of tumor necrosis factor receptor 1 via exosome-like vesicles; the function seems to involve PKA and specifically PRKAR2B. Proposed to act as A kinase-anchoring protein (AKAP) and may mediate crosstalk between Arf and PKA pathways. In Mus musculus (Mouse), this protein is Brefeldin A-inhibited guanine nucleotide-exchange protein 2 (Arfgef2).